The chain runs to 370 residues: Caffeic acid 3-O-methyltransferase (370 aa).

Residues 1-2 constitute a propeptide that is removed on maturation; it reads MG. 135–141 contacts substrate; the sequence is MNQDKVL. Positions 167–185 are substrate binding; the sequence is AFEYHGTDPRFNKVFNRGM. 5 residues coordinate S-adenosyl-L-methionine: Gly-213, Asp-236, Asp-256, Met-257, and Lys-270. His-274 functions as the Proton acceptor in the catalytic mechanism.

The protein belongs to the class I-like SAM-binding methyltransferase superfamily. Cation-independent O-methyltransferase family. COMT subfamily. As to quaternary structure, homodimer.

It catalyses the reaction (E)-caffeate + S-adenosyl-L-methionine = (E)-ferulate + S-adenosyl-L-homocysteine + H(+). It functions in the pathway aromatic compound metabolism; phenylpropanoid biosynthesis. Its function is as follows. Catalyzes the conversion of caffeic acid to ferulic acid and of 5-hydroxyferulic acid to sinapic acid. The resulting products may subsequently be converted to the corresponding alcohols that are incorporated into lignins. The protein is Caffeic acid 3-O-methyltransferase (COMT) of Clarkia breweri (Fairy fans).